We begin with the raw amino-acid sequence, 316 residues long: Beta-ketoacyl-[acyl-carrier-protein] synthase III (316 aa).

Catalysis depends on residues cysteine 112 and histidine 243. The tract at residues 244–248 is ACP-binding; the sequence is QANLR. Asparagine 273 is a catalytic residue.

The protein belongs to the thiolase-like superfamily. FabH family. As to quaternary structure, homodimer.

The protein localises to the cytoplasm. It carries out the reaction malonyl-[ACP] + acetyl-CoA + H(+) = 3-oxobutanoyl-[ACP] + CO2 + CoA. Its pathway is lipid metabolism; fatty acid biosynthesis. Catalyzes the condensation reaction of fatty acid synthesis by the addition to an acyl acceptor of two carbons from malonyl-ACP. Catalyzes the first condensation reaction which initiates fatty acid synthesis and may therefore play a role in governing the total rate of fatty acid production. Possesses both acetoacetyl-ACP synthase and acetyl transacylase activities. Its substrate specificity determines the biosynthesis of branched-chain and/or straight-chain of fatty acids. The sequence is that of Beta-ketoacyl-[acyl-carrier-protein] synthase III from Histophilus somni (strain 2336) (Haemophilus somnus).